We begin with the raw amino-acid sequence, 926 residues long: Protein transport protein SEC24-2 (926 aa).

The segment at 1–54 (MSHHKKRVYPQAQAQYGQSATPLQQPAQLVPPQDPAAAGMSYAQMGMPPQGAAA) is disordered. A compositionally biased stretch (low complexity) spans 20–54 (ATPLQQPAQLVPPQDPAAAGMSYAQMGMPPQGAAA). Residues C231, C234, C253, and C256 each contribute to the Zn(2+) site. Residues 231–256 (CRRCRSYMNPFITFIEQGRRWRCNFC) form a zinc finger-like region.

Belongs to the SEC23/SEC24 family. SEC24 subfamily. In terms of assembly, the COPII coat is composed of at least 5 proteins: the SEC23/24 complex, the SEC13/31 complex, and the protein SAR1. Golgi apparatus membrane; Peripheral membrane protein; Cytoplasmic side.

It localises to the cytoplasm. It is found in the cytoplasmic vesicle. The protein resides in the COPII-coated vesicle membrane. The protein localises to the endoplasmic reticulum membrane. Its subcellular location is the golgi apparatus membrane. Functionally, component of the coat protein complex II (COPII) which promotes the formation of transport vesicles from the endoplasmic reticulum (ER). The coat has two main functions, the physical deformation of the endoplasmic reticulum membrane into vesicles and the selection of cargo molecules. The polypeptide is Protein transport protein SEC24-2 (SEC242) (Saccharomyces uvarum (strain ATCC 76518 / CBS 7001 / CLIB 283 / NBRC 10550 / MCYC 623 / NCYC 2669 / NRRL Y-11845) (Yeast)).